Consider the following 229-residue polypeptide: UPF0173 metal-dependent hydrolase SAR1785 (229 aa).

It belongs to the UPF0173 family.

The chain is UPF0173 metal-dependent hydrolase SAR1785 from Staphylococcus aureus (strain MRSA252).